The sequence spans 181 residues: uncharacterized protein (181 aa).

A disordered region spans residues Gln-162–Ala-181.

This is an uncharacterized protein from Homo sapiens (Human).